Reading from the N-terminus, the 148-residue chain is Small ribosomal subunit protein eS6 (148 aa).

It belongs to the eukaryotic ribosomal protein eS6 family.

This is Small ribosomal subunit protein eS6 from Pyrobaculum islandicum (strain DSM 4184 / JCM 9189 / GEO3).